A 294-amino-acid chain; its full sequence is Acetyl-coenzyme A carboxylase carboxyl transferase subunit beta (294 aa).

The CoA carboxyltransferase N-terminal domain occupies 30 to 294; the sequence is IMTKCPECKK…PGVGGEVDGE (265 aa). The Zn(2+) site is built by Cys34, Cys37, Cys53, and Cys56. Residues 34-56 form a C4-type zinc finger; the sequence is CPECKKIMYTKELQKNLMVCNYC.

It belongs to the AccD/PCCB family. In terms of assembly, acetyl-CoA carboxylase is a heterohexamer composed of biotin carboxyl carrier protein (AccB), biotin carboxylase (AccC) and two subunits each of ACCase subunit alpha (AccA) and ACCase subunit beta (AccD). Zn(2+) is required as a cofactor.

It localises to the cytoplasm. The catalysed reaction is N(6)-carboxybiotinyl-L-lysyl-[protein] + acetyl-CoA = N(6)-biotinyl-L-lysyl-[protein] + malonyl-CoA. It functions in the pathway lipid metabolism; malonyl-CoA biosynthesis; malonyl-CoA from acetyl-CoA: step 1/1. Functionally, component of the acetyl coenzyme A carboxylase (ACC) complex. Biotin carboxylase (BC) catalyzes the carboxylation of biotin on its carrier protein (BCCP) and then the CO(2) group is transferred by the transcarboxylase to acetyl-CoA to form malonyl-CoA. This Listeria monocytogenes serovar 1/2a (strain ATCC BAA-679 / EGD-e) protein is Acetyl-coenzyme A carboxylase carboxyl transferase subunit beta.